A 304-amino-acid chain; its full sequence is CD-NTase-associated protein 6 (304 aa).

75–80 (GTGKTS) lines the ATP pocket.

Belongs to the AAA ATPase family. Oligomerizes. Homohexamer. Forms a 1:1:6 CdnD:Cap7:Cap6 complex.

Functionally, regulates complex assembly in a CBASS antivirus system. CBASS (cyclic oligonucleotide-based antiphage signaling system) provides immunity against bacteriophage. The CD-NTase protein synthesizes cyclic nucleotides in response to infection; these serve as specific second messenger signals. The signals activate a diverse range of effectors, leading to bacterial cell death and thus abortive phage infection. A type III-C(AAA) CBASS system. Prevents the CdnD:Cap7:Cap8 complex (also called CdnD:HORMA2:HORMA3) from synthesizing 2',3',3'-cyclic AMP-AMP-AMP (cAAA). Binds and disassembles an active CdnD:Cap7:Cap8 complex, inhibiting the complex's ability to synthesize cyclic nucleotide second messengers. An AAA+-ATPase remodeler, in the absence of foreign threat Cap6 probably maintains the Cap7 protein in an open, inactive state. Once activated (presumably by a bacteriophage protein) Cap7 binds to and activates its cognate CD-NTase (CdnD in this bacteria) to synthesize cAAA, a cyclic nucleotide second messenger. cAAA activates the NucC endonuclease which degrades all DNA in the infected cell, causing cell death and abortive phage infection. This Pseudomonas aeruginosa protein is CD-NTase-associated protein 6.